Reading from the N-terminus, the 94-residue chain is Integration host factor subunit beta (94 aa).

The protein belongs to the bacterial histone-like protein family. Heterodimer of an alpha and a beta chain.

Functionally, this protein is one of the two subunits of integration host factor, a specific DNA-binding protein that functions in genetic recombination as well as in transcriptional and translational control. This is Integration host factor subunit beta from Pectobacterium atrosepticum (strain SCRI 1043 / ATCC BAA-672) (Erwinia carotovora subsp. atroseptica).